Reading from the N-terminus, the 397-residue chain is Citrate synthase (397 aa).

Active-site residues include H266 and D320.

The protein belongs to the citrate synthase family.

It catalyses the reaction oxaloacetate + acetyl-CoA + H2O = citrate + CoA + H(+). The protein operates within carbohydrate metabolism; tricarboxylic acid cycle; isocitrate from oxaloacetate: step 1/2. In Synechocystis sp. (strain ATCC 27184 / PCC 6803 / Kazusa), this protein is Citrate synthase (gltA).